Consider the following 199-residue polypeptide: Chaperone protein TorD (199 aa).

Belongs to the TorD/DmsD family. TorD subfamily.

It localises to the cytoplasm. Involved in the biogenesis of TorA. Acts on TorA before the insertion of the molybdenum cofactor and, as a result, probably favors a conformation of the apoenzyme that is competent for acquiring the cofactor. This Escherichia coli O81 (strain ED1a) protein is Chaperone protein TorD.